A 192-amino-acid chain; its full sequence is UPF0312 protein PFLU_5725 (192 aa).

The signal sequence occupies residues methionine 1–alanine 23.

It belongs to the UPF0312 family. Type 1 subfamily.

Its subcellular location is the periplasm. This Pseudomonas fluorescens (strain SBW25) protein is UPF0312 protein PFLU_5725.